The chain runs to 1292 residues: Kinesin-like protein KIN-12A (1292 aa).

Residues 1 to 86 (MKKHFTLPRN…LSAETATESG (86 aa)) form a disordered region. Residues 19–29 (PHSPNPSISKS) are compositionally biased toward low complexity. Residues 62–71 (PLPPRPPPSN) show a composition bias toward pro residues. One can recognise a Kinesin motor domain in the interval 91–426 (GVKVIVRMKP…LRFAQRAKAI (336 aa)). An ATP-binding site is contributed by 165–172 (GQTGSGKT). Microtubules-binding stretches follow at residues 293 to 297 (SSRSH), 326 to 332 (VDLAGSE), and 375 to 379 (HIPYR). The neck stretch occupies residues 424-461 (KAIQNKAVVNEVMQDDVNFLRGVIHQLRDELQRMKNDG). The segment at 677-724 (SVSPTIRNSRKSLKTSELSTASQKDSEGENLVTEAADPSPATSKKMNN) is disordered. Coiled coils occupy residues 945–992 (EVLK…CYID) and 1047–1232 (SEEL…NQLV).

It belongs to the TRAFAC class myosin-kinesin ATPase superfamily. Kinesin family. KIN-12 subfamily. As to quaternary structure, homodimer and heterodimer with KIN12B. Interacts with TIO.

It localises to the cytoplasm. It is found in the cytoskeleton. The protein resides in the phragmoplast. In terms of biological role, plus-end directed kinesin-like motor enzyme that plays a critical role in the organization of phragmoplast microtubules during cytokinesis. Constitutes a signaling module in association with serine/threonine-protein kinase TIO that is required to support phragmoplast expansion and cell-plate growth in plant cells. Binds microtubules in an ATP-sensitive manner. In Arabidopsis thaliana (Mouse-ear cress), this protein is Kinesin-like protein KIN-12A.